Reading from the N-terminus, the 206-residue chain is Ribosomal RNA small subunit methyltransferase G (206 aa).

Residues glycine 73, leucine 78, valine 124 to glutamate 125, and arginine 139 each bind S-adenosyl-L-methionine.

This sequence belongs to the methyltransferase superfamily. RNA methyltransferase RsmG family.

It is found in the cytoplasm. It carries out the reaction guanosine(527) in 16S rRNA + S-adenosyl-L-methionine = N(7)-methylguanosine(527) in 16S rRNA + S-adenosyl-L-homocysteine. Its function is as follows. Specifically methylates the N7 position of guanine in position 527 of 16S rRNA. The chain is Ribosomal RNA small subunit methyltransferase G from Pectobacterium carotovorum subsp. carotovorum (strain PC1).